The following is a 140-amino-acid chain: ATP synthase epsilon chain (140 aa).

Belongs to the ATPase epsilon chain family. In terms of assembly, F-type ATPases have 2 components, CF(1) - the catalytic core - and CF(0) - the membrane proton channel. CF(1) has five subunits: alpha(3), beta(3), gamma(1), delta(1), epsilon(1). CF(0) has three main subunits: a, b and c.

It is found in the cell inner membrane. Functionally, produces ATP from ADP in the presence of a proton gradient across the membrane. This chain is ATP synthase epsilon chain, found in Neisseria meningitidis serogroup C / serotype 2a (strain ATCC 700532 / DSM 15464 / FAM18).